Consider the following 122-residue polypeptide: Ribosome-binding factor A (122 aa).

This sequence belongs to the RbfA family. As to quaternary structure, monomer. Binds 30S ribosomal subunits, but not 50S ribosomal subunits or 70S ribosomes.

The protein localises to the cytoplasm. In terms of biological role, one of several proteins that assist in the late maturation steps of the functional core of the 30S ribosomal subunit. Associates with free 30S ribosomal subunits (but not with 30S subunits that are part of 70S ribosomes or polysomes). Required for efficient processing of 16S rRNA. May interact with the 5'-terminal helix region of 16S rRNA. The polypeptide is Ribosome-binding factor A (Burkholderia thailandensis (strain ATCC 700388 / DSM 13276 / CCUG 48851 / CIP 106301 / E264)).